The primary structure comprises 185 residues: Protein GrpE (185 aa).

Residues methionine 1–threonine 20 are compositionally biased toward basic and acidic residues. The segment at methionine 1 to alanine 28 is disordered.

Belongs to the GrpE family. In terms of assembly, homodimer.

It is found in the cytoplasm. Its function is as follows. Participates actively in the response to hyperosmotic and heat shock by preventing the aggregation of stress-denatured proteins, in association with DnaK and GrpE. It is the nucleotide exchange factor for DnaK and may function as a thermosensor. Unfolded proteins bind initially to DnaJ; upon interaction with the DnaJ-bound protein, DnaK hydrolyzes its bound ATP, resulting in the formation of a stable complex. GrpE releases ADP from DnaK; ATP binding to DnaK triggers the release of the substrate protein, thus completing the reaction cycle. Several rounds of ATP-dependent interactions between DnaJ, DnaK and GrpE are required for fully efficient folding. The protein is Protein GrpE of Sulfurimonas denitrificans (strain ATCC 33889 / DSM 1251) (Thiomicrospira denitrificans (strain ATCC 33889 / DSM 1251)).